Here is a 147-residue protein sequence, read N- to C-terminus: F420H(2)-dependent reductase Rv1155 (147 aa).

Coenzyme F420-(gamma-Glu)n contacts are provided by residues glutamine 32, glutamine 37, serine 50, 56 to 60 (AKTRN), 77 to 79 (WSY), and histidine 138.

It belongs to the F420H(2)-dependent biliverdin reductase family. Homodimer.

In terms of biological role, F420H(2)-dependent reductase able to catalyze the reduction of biliverdin-IXalpha to bilirubin-IXalpha in vitro. However, kinetic parameters show that it is less efficient than the biliverdin reductase Rv2074 and suggest biliverdin-IXalpha is unlikely to be the native substrate of Rv1155, which probably catalyzes the reduction of an alternative molecule in vivo. Binds coenzyme F420, but does not bind FMN or other flavins. Cannot use pyridoxine 5'-phosphate, pyridoxamine 5'-phosphate, pyridoxal 5'-phosphate (PLP), the anti-tuberculosis drug PA-824 or aflatoxin analogs as substrates. The polypeptide is F420H(2)-dependent reductase Rv1155 (Mycobacterium tuberculosis (strain ATCC 25618 / H37Rv)).